Here is a 108-residue protein sequence, read N- to C-terminus: Nucleoid-associated protein Bpet3552 (108 aa).

Belongs to the YbaB/EbfC family. Homodimer.

The protein resides in the cytoplasm. The protein localises to the nucleoid. In terms of biological role, binds to DNA and alters its conformation. May be involved in regulation of gene expression, nucleoid organization and DNA protection. The protein is Nucleoid-associated protein Bpet3552 of Bordetella petrii (strain ATCC BAA-461 / DSM 12804 / CCUG 43448).